The following is a 188-amino-acid chain: RWD domain-containing protein 4 (188 aa).

An RWD domain is found at 9–111; it reads MELEALRSIY…EYAKDHKEQF (103 aa). The interval 132–167 is disordered; sequence TPTTAPSSKKKEKKEQLSKAQKRKLADKTDHKGELP. The segment covering 155 to 166 has biased composition (basic and acidic residues); that stretch reads KLADKTDHKGEL.

This is RWD domain-containing protein 4 (Rwdd4) from Mus musculus (Mouse).